A 385-amino-acid chain; its full sequence is 26S proteasome non-ATPase regulatory subunit 13 (385 aa).

The PCI domain occupies 176–347 (EFYKNALMYL…EIIHITWVTP (172 aa)).

It belongs to the proteasome subunit S11 family.

Acts as a regulatory subunit of the 26S proteasome which is involved in the ATP-dependent degradation of ubiquitinated proteins. In Dictyostelium discoideum (Social amoeba), this protein is 26S proteasome non-ATPase regulatory subunit 13 (psmD13).